A 314-amino-acid chain; its full sequence is GTP cyclohydrolase FolE2 (314 aa).

The interval 290–314 is disordered; that stretch reads DASAWSAPQAAAPDQQESFATGNER. Residues 291 to 304 are compositionally biased toward low complexity; the sequence is ASAWSAPQAAAPDQ. Residues 305–314 are compositionally biased toward polar residues; that stretch reads QESFATGNER.

The protein belongs to the GTP cyclohydrolase IV family.

The catalysed reaction is GTP + H2O = 7,8-dihydroneopterin 3'-triphosphate + formate + H(+). The protein operates within cofactor biosynthesis; 7,8-dihydroneopterin triphosphate biosynthesis; 7,8-dihydroneopterin triphosphate from GTP: step 1/1. Converts GTP to 7,8-dihydroneopterin triphosphate. The sequence is that of GTP cyclohydrolase FolE2 from Pseudomonas putida (strain ATCC 47054 / DSM 6125 / CFBP 8728 / NCIMB 11950 / KT2440).